Reading from the N-terminus, the 203-residue chain is Small ribosomal subunit protein uS4 (203 aa).

The S4 RNA-binding domain maps to 93-156 (RRLDNVVYRL…MKVPAILEAV (64 aa)).

The protein belongs to the universal ribosomal protein uS4 family. Part of the 30S ribosomal subunit. Contacts protein S5. The interaction surface between S4 and S5 is involved in control of translational fidelity.

Functionally, one of the primary rRNA binding proteins, it binds directly to 16S rRNA where it nucleates assembly of the body of the 30S subunit. In terms of biological role, with S5 and S12 plays an important role in translational accuracy. In Streptococcus uberis (strain ATCC BAA-854 / 0140J), this protein is Small ribosomal subunit protein uS4.